We begin with the raw amino-acid sequence, 962 residues long: Atromentin synthetase nps3 (962 aa).

Residues 55–469 (FISSSAHDSS…SGRIKDTVIV (415 aa)) are adenylation (A) domain. Residues 601 to 679 (VPATITETAF…DLAKYIDALV (79 aa)) form the Carrier domain. The tract at residues 606–676 (TETAFAKIFA…VLRDLAKYID (71 aa)) is thiolation and peptide carrier (T) domain. Residue Ser-638 is modified to O-(pantetheine 4'-phosphoryl)serine. Positions 702–805 (PIFFVHPGVG…VGLINIPPHI (104 aa)) are thioesterase (TE) domain.

It belongs to the ATP-dependent AMP-binding enzyme family.

The protein operates within secondary metabolite biosynthesis. In terms of biological role, an L-tyrosine:2-oxoglutarate aminotransferase (probably amt1) and atromentin synthetase nps3 catalyze consecutive steps to turn over L-tyrosine into atromentin, which represents the generic precursor molecule for the entire terphenylquinone and pulvinic acid family of pigments, which are widely distributed secondary metabolites in homobasidiomycetes. The first step catalyzed by the aminotransferase converts L-tyrosine in to 4-hydroxyphenylpyruvate (4-HPP). Adenylation of two 4-HPP monomers by the nps3 adenylation (A) domain, covalent tethering of the monomers as a thioester and oxoester onto the nps3 thiolation (T) and thioesterase (TE) domains, respectively, and symmetric C-C-bond formation between two monomers catalyzed by the nps3 TE domain leads to atromentin. Follow-up products of atromentin in S.lacrymans include atromentic acid, xerocomic acid, isoxerocomic acid and variegatic acid. The protein is Atromentin synthetase nps3 (nps3) of Serpula lacrymans var. lacrymans (strain S7.9) (Dry rot fungus).